The primary structure comprises 165 residues: Interferon gamma (165 aa).

Residues Met1 to Cys23 form the signal peptide. Gln24 carries the pyrrolidone carboxylic acid modification. 2 N-linked (GlcNAc...) asparagine glycosylation sites follow: Asn48 and Asn120.

It belongs to the type II (or gamma) interferon family. Homodimer. Interacts with IFNGR1 (via extracellular domain); this interaction promotes IFNGR1 dimerization.

The protein resides in the secreted. Type II interferon produced by immune cells such as T-cells and NK cells that plays crucial roles in antimicrobial, antiviral, and antitumor responses by activating effector immune cells and enhancing antigen presentation. Primarily signals through the JAK-STAT pathway after interaction with its receptor IFNGR1 to affect gene regulation. Upon IFNG binding, IFNGR1 intracellular domain opens out to allow association of downstream signaling components JAK2, JAK1 and STAT1, leading to STAT1 activation, nuclear translocation and transcription of IFNG-regulated genes. Many of the induced genes are transcription factors such as IRF1 that are able to further drive regulation of a next wave of transcription. Plays a role in class I antigen presentation pathway by inducing a replacement of catalytic proteasome subunits with immunoproteasome subunits. In turn, increases the quantity, quality, and repertoire of peptides for class I MHC loading. Increases the efficiency of peptide generation also by inducing the expression of activator PA28 that associates with the proteasome and alters its proteolytic cleavage preference. Up-regulates as well MHC II complexes on the cell surface by promoting expression of several key molecules such as cathepsins B/CTSB, H/CTSH, and L/CTSL. Participates in the regulation of hematopoietic stem cells during development and under homeostatic conditions by affecting their development, quiescence, and differentiation. In Papio anubis (Olive baboon), this protein is Interferon gamma (IFNG).